Here is a 361-residue protein sequence, read N- to C-terminus: N-methyltransferase benX (361 aa).

This sequence belongs to the methyltransferase superfamily.

The protein operates within secondary metabolite biosynthesis. Its function is as follows. N-methyltransferase; part of the gene cluster that mediates the biosynthesis of benzomalvin A and D. The pathway begins with the loading of amino acid precursors onto the A domains of the non ribosomal peptide synthetases benY and benZ. BenY and the A1 domain of benZ are loaded with anthranilate (Anth), while the A2 domain of benZ is loaded with phenylalanine (Phe). N-methylation of Phe by the methyltransferase benX may happen before loading of Phe onto benZ, after loading of Phe, or after dipeptide formation. Condensation of Anth with the secondary amine of NmPhe or Phe is catalyzed by the C1 domain of benZ, forming a dipeptide intermediate. This is followed by in trans condensation of the Anth-NmPhe dipeptide with Anth bound to the T domain of benY by the C2 domain of benZ to form the linear tripeptide Anth-NmPhe-Anth. Cyclization and release of the tripeptide is then catalyzed by the C-terminal C domain of benY and the resulting 11-member macrocyclic intermediate is expected to spontaneously collapse to form the benzodiazepine core. Benzomalvin A is in conformational equilibrium with its atropisomer, benzomalvin D. The protein is N-methyltransferase benX of Aspergillus terreus.